The following is a 491-amino-acid chain: Angiopoietin-related protein 1 (491 aa).

The N-terminal stretch at 1–23 (MKTFTWTLGVLFFLLVDTGHCRG) is a signal peptide. Residues 80–168 (ITRMDLENLK…LNVTTEMLKM (89 aa)) are a coiled coil. 2 N-linked (GlcNAc...) asparagine glycosylation sites follow: Asn-160 and Asn-188. Residues 271-491 (FINEGPFKDC…AVQMMIKPID (221 aa)) form the Fibrinogen C-terminal domain. 2 disulfides stabilise this stretch: Cys-280–Cys-309 and Cys-432–Cys-445.

In terms of tissue distribution, highly expressed in adrenal gland, placenta, thyroid gland, heart, skeletal muscle and small intestine. Weakly expressed in testis, ovary, colon, pancreas, kidney and stomach.

It is found in the secreted. The protein is Angiopoietin-related protein 1 (ANGPTL1) of Homo sapiens (Human).